Here is a 198-residue protein sequence, read N- to C-terminus: Recombination protein RecR (198 aa).

The segment at 57–72 (CSVCGHITDKDPCYIC) adopts a C4-type zinc-finger fold. Residues 80–175 (SVICVVQESK…KVTRIAHGLP (96 aa)) form the Toprim domain.

It belongs to the RecR family.

In terms of biological role, may play a role in DNA repair. It seems to be involved in an RecBC-independent recombinational process of DNA repair. It may act with RecF and RecO. This Listeria monocytogenes serotype 4b (strain CLIP80459) protein is Recombination protein RecR.